Reading from the N-terminus, the 207-residue chain is Guanylate kinase (207 aa).

Positions 4-184 constitute a Guanylate kinase-like domain; it reads GTLYIVSAPS…ALSDLKTIIR (181 aa). 11–18 contributes to the ATP binding site; it reads APSGAGKS.

Belongs to the guanylate kinase family.

It localises to the cytoplasm. The enzyme catalyses GMP + ATP = GDP + ADP. Its function is as follows. Essential for recycling GMP and indirectly, cGMP. The sequence is that of Guanylate kinase from Yersinia pestis bv. Antiqua (strain Antiqua).